A 203-amino-acid chain; its full sequence is Large ribosomal subunit protein bL25 (203 aa).

The protein belongs to the bacterial ribosomal protein bL25 family. CTC subfamily. Part of the 50S ribosomal subunit; part of the 5S rRNA/L5/L18/L25 subcomplex. Contacts the 5S rRNA. Binds to the 5S rRNA independently of L5 and L18.

Functionally, this is one of the proteins that binds to the 5S RNA in the ribosome where it forms part of the central protuberance. The chain is Large ribosomal subunit protein bL25 from Rickettsia rickettsii (strain Iowa).